The chain runs to 147 residues: Large ribosomal subunit protein bL9 (147 aa).

This sequence belongs to the bacterial ribosomal protein bL9 family.

Its function is as follows. Binds to the 23S rRNA. This is Large ribosomal subunit protein bL9 from Halalkalibacterium halodurans (strain ATCC BAA-125 / DSM 18197 / FERM 7344 / JCM 9153 / C-125) (Bacillus halodurans).